Reading from the N-terminus, the 525-residue chain is Putative ribose/galactose/methyl galactoside import ATP-binding protein (525 aa).

Residues 1 to 15 (MFGSATANPPAQRNL) show a composition bias toward polar residues. The tract at residues 1-23 (MFGSATANPPAQRNLPSGDGDGG) is disordered. ABC transporter domains are found at residues 33–269 (LEIS…VGRE) and 279–523 (KPAG…SGHK). 65 to 72 (GENGAGKS) is a binding site for ATP.

The protein belongs to the ABC transporter superfamily. Carbohydrate importer 2 (CUT2) (TC 3.A.1.2) family.

Its subcellular location is the cell inner membrane. The catalysed reaction is D-ribose(out) + ATP + H2O = D-ribose(in) + ADP + phosphate + H(+). It catalyses the reaction D-galactose(out) + ATP + H2O = D-galactose(in) + ADP + phosphate + H(+). Part of an ABC transporter complex involved in carbohydrate import. Could be involved in ribose, galactose and/or methyl galactoside import. Responsible for energy coupling to the transport system. In Pseudomonas syringae pv. syringae (strain B728a), this protein is Putative ribose/galactose/methyl galactoside import ATP-binding protein.